The chain runs to 372 residues: MYNNKTMGSNKTIIINLNNLEHNLNLIKNKIGEKEIVATLKGDAYGHGLINIFKFLKSKNINYFGLSNIEDAKTLKKIDKNIKILMYIKVDKKEIKNLIKFELVPFVSDFEYLFLIEKECALQKNKIKVHLKIDIGMNRYGIKIDDALEIATYIQNSKFLELEGICSHLPSIENFKTTQKQIEQFLFFLETLKQKNIHPKFVHISNSGHIINYKLNPQFNMVRPGLILYGYCQSLKNKKPALNFKPVLSLFSKVIFIKNVKKGEKISYSGIFQAKEDMKIGIIPIGYFDGIPQNISNDFYFLINNKKCKIRGKVCMNLTIVEIPKDLKVKTGSKVEIVSEKLSIDEMSKFSKRSHYELLCNIGKYEKRKYLD.

The Proton acceptor; specific for D-alanine role is filled by lysine 41. N6-(pyridoxal phosphate)lysine is present on lysine 41. Residue arginine 139 coordinates substrate. Tyrosine 268 (proton acceptor; specific for L-alanine) is an active-site residue. Methionine 316 contributes to the substrate binding site.

It belongs to the alanine racemase family. Pyridoxal 5'-phosphate is required as a cofactor.

It carries out the reaction L-alanine = D-alanine. It participates in amino-acid biosynthesis; D-alanine biosynthesis; D-alanine from L-alanine: step 1/1. Its function is as follows. Catalyzes the interconversion of L-alanine and D-alanine. May also act on other amino acids. This Borreliella burgdorferi (strain ATCC 35210 / DSM 4680 / CIP 102532 / B31) (Borrelia burgdorferi) protein is Alanine racemase (alr).